A 101-amino-acid chain; its full sequence is UPF0473 protein MGAS10750_Spy1887 (101 aa).

Belongs to the UPF0473 family.

The chain is UPF0473 protein MGAS10750_Spy1887 from Streptococcus pyogenes serotype M4 (strain MGAS10750).